The sequence spans 361 residues: Queuine tRNA-ribosyltransferase (361 aa).

The active-site Proton acceptor is the Asp-92. Substrate-binding positions include 92–96 (DSGGF), Asp-146, Gln-189, and Gly-216. Residues 247-253 (GVGKPAD) form an RNA binding region. The active-site Nucleophile is the Asp-266. The interval 271–275 (TRSGR) is RNA binding; important for wobble base 34 recognition. Zn(2+) contacts are provided by Cys-304, Cys-306, Cys-309, and His-335.

The protein belongs to the queuine tRNA-ribosyltransferase family. As to quaternary structure, homodimer. Within each dimer, one monomer is responsible for RNA recognition and catalysis, while the other monomer binds to the replacement base PreQ1. Requires Zn(2+) as cofactor.

The enzyme catalyses 7-aminomethyl-7-carbaguanine + guanosine(34) in tRNA = 7-aminomethyl-7-carbaguanosine(34) in tRNA + guanine. Its pathway is tRNA modification; tRNA-queuosine biosynthesis. Functionally, catalyzes the base-exchange of a guanine (G) residue with the queuine precursor 7-aminomethyl-7-deazaguanine (PreQ1) at position 34 (anticodon wobble position) in tRNAs with GU(N) anticodons (tRNA-Asp, -Asn, -His and -Tyr). Catalysis occurs through a double-displacement mechanism. The nucleophile active site attacks the C1' of nucleotide 34 to detach the guanine base from the RNA, forming a covalent enzyme-RNA intermediate. The proton acceptor active site deprotonates the incoming PreQ1, allowing a nucleophilic attack on the C1' of the ribose to form the product. After dissociation, two additional enzymatic reactions on the tRNA convert PreQ1 to queuine (Q), resulting in the hypermodified nucleoside queuosine (7-(((4,5-cis-dihydroxy-2-cyclopenten-1-yl)amino)methyl)-7-deazaguanosine). This Rickettsia typhi (strain ATCC VR-144 / Wilmington) protein is Queuine tRNA-ribosyltransferase.